The chain runs to 340 residues: Methionyl-tRNA formyltransferase (340 aa).

Position 110–113 (110–113) interacts with (6S)-5,6,7,8-tetrahydrofolate; the sequence is SLLP.

It belongs to the Fmt family.

The catalysed reaction is L-methionyl-tRNA(fMet) + (6R)-10-formyltetrahydrofolate = N-formyl-L-methionyl-tRNA(fMet) + (6S)-5,6,7,8-tetrahydrofolate + H(+). Its function is as follows. Attaches a formyl group to the free amino group of methionyl-tRNA(fMet). The formyl group appears to play a dual role in the initiator identity of N-formylmethionyl-tRNA by promoting its recognition by IF2 and preventing the misappropriation of this tRNA by the elongation apparatus. This chain is Methionyl-tRNA formyltransferase, found in Synechococcus sp. (strain WH7803).